A 543-amino-acid polypeptide reads, in one-letter code: Germacrene A synthase (543 aa).

The Mg(2+) site is built by D296, D300, D439, and E447. The short motif at 296 to 300 (DDTYD) is the DDXXD motif element.

It belongs to the terpene synthase family. Tpsa subfamily. Mg(2+) is required as a cofactor. The cofactor is Mn(2+). As to expression, barely detectable in leaves.

The protein localises to the plastid. It is found in the chloroplast. It carries out the reaction (2E,6E)-farnesyl diphosphate = germacrene A + diphosphate. It catalyses the reaction (2E,6E)-farnesyl diphosphate = (1S,2S,4R)-beta-elemene + diphosphate. The protein operates within secondary metabolite biosynthesis; terpenoid biosynthesis. Sesquiterpene synthase involved in the biosynthesis of volatile compounds widely used in aromatherapy and folk medicine, and present in culinary herbs. Mediates the conversion of (2E,6E)-farnesyl diphosphate (FPP) into germacrene A and beta-elemene. Not able to use (2E)-geranyl diphosphate (GPP) as substrate. This chain is Germacrene A synthase, found in Lavandula viridis (Green lavender).